The following is a 312-amino-acid chain: Pre-mRNA-splicing factor 38A (312 aa).

The tract at residues 1-179 (MANRTVKDAH…VLEEAEQLEP (179 aa)) is N-terminal protein interaction domain. Phosphoserine is present on residues serine 11, serine 193, serine 194, serine 209, and serine 226. Positions 170–204 (VLEEAEQLEPRVSALEEDMDDVESSEEEEEEDEKL) form a coiled coil. A disordered region spans residues 181–312 (VSALEEDMDD…SHKKSRRGNE (132 aa)). A compositionally biased stretch (acidic residues) spans 184–202 (LEEDMDDVESSEEEEEEDE). Positions 203-224 (KLERVPSPDHRRRSYRDLDKPR) are enriched in basic and acidic residues. Composition is skewed to basic residues over residues 225–294 (RSPA…RSHS) and 301–312 (KKSHKKSRRGNE).

Belongs to the PRP38 family. In terms of assembly, component of the spliceosome B complex. Interacts (via N-terminal interaction domain) with ZMAT2 and MFAP1.

It localises to the nucleus. In terms of biological role, involved in pre-mRNA splicing as a component of the spliceosome. The polypeptide is Pre-mRNA-splicing factor 38A (Prpf38a) (Mus musculus (Mouse)).